We begin with the raw amino-acid sequence, 61 residues long: Alpha-conotoxine-like Am1.3 (61 aa).

The first 21 residues, 1–21 (MGMRMMFTVFLLVVLATTVVS), serve as a signal peptide directing secretion. A propeptide spanning residues 22-44 (FMSGRASHGRNAAASDLIALTIK) is cleaved from the precursor. Cys60 carries the cysteine amide modification.

This sequence belongs to the conotoxin A superfamily. Post-translationally, is not hydroxylated. In terms of processing, contains 2 disulfide bonds. As to expression, expressed by the venom duct.

The protein resides in the secreted. Functionally, alpha-conotoxins act on postsynaptic membranes, they bind to the nicotinic acetylcholine receptors (nAChR) and thus inhibit them. The chain is Alpha-conotoxine-like Am1.3 from Conus amadis (Amadis cone).